A 42-amino-acid chain; its full sequence is Photosystem I reaction center subunit IX (42 aa).

A helical transmembrane segment spans residues 7–27 (YLSTAPVLAALSLGFLAGLLI).

Belongs to the PsaJ family.

The protein resides in the plastid. It is found in the chloroplast thylakoid membrane. May help in the organization of the PsaE and PsaF subunits. In Cryptomeria japonica (Japanese cedar), this protein is Photosystem I reaction center subunit IX.